The chain runs to 111 residues: Ig kappa chain V-III region PC 7769 (111 aa).

The segment at 1 to 23 is framework-1; it reads DIVLTQSPASLAVSLGQRATISC. Cys-23 and Cys-92 are joined by a disulfide. The segment at 24-38 is complementarity-determining-1; it reads KASQSVDYDGDSYMN. Residues 39 to 53 form a framework-2 region; sequence WYQQKPGQPPKVLIF. The tract at residues 54–60 is complementarity-determining-2; the sequence is AASNLES. The framework-3 stretch occupies residues 61–92; that stretch reads GIPARFSGSGSGTDFTLNIHPVEEEDAATYYC. Residues 93–101 form a complementarity-determining-3 region; the sequence is QQSNEDPWT. The segment at 102–111 is framework-4; it reads FGSGTKLEIK.

This Mus musculus (Mouse) protein is Ig kappa chain V-III region PC 7769.